Reading from the N-terminus, the 417-residue chain is Glutamyl-tRNA reductase (417 aa).

Residues 49 to 52 (TCNR), S109, 114 to 116 (ESQ), and Q120 each bind substrate. Catalysis depends on C50, which acts as the Nucleophile. NADP(+) is bound at residue 189-194 (GLGEIG).

The protein belongs to the glutamyl-tRNA reductase family. In terms of assembly, homodimer.

The enzyme catalyses (S)-4-amino-5-oxopentanoate + tRNA(Glu) + NADP(+) = L-glutamyl-tRNA(Glu) + NADPH + H(+). Its pathway is porphyrin-containing compound metabolism; protoporphyrin-IX biosynthesis; 5-aminolevulinate from L-glutamyl-tRNA(Glu): step 1/2. In terms of biological role, catalyzes the NADPH-dependent reduction of glutamyl-tRNA(Glu) to glutamate 1-semialdehyde (GSA). In Streptococcus sanguinis (strain SK36), this protein is Glutamyl-tRNA reductase.